A 104-amino-acid polypeptide reads, in one-letter code: Large ribosomal subunit protein uL24 (104 aa).

Belongs to the universal ribosomal protein uL24 family. As to quaternary structure, part of the 50S ribosomal subunit.

In terms of biological role, one of two assembly initiator proteins, it binds directly to the 5'-end of the 23S rRNA, where it nucleates assembly of the 50S subunit. One of the proteins that surrounds the polypeptide exit tunnel on the outside of the subunit. The sequence is that of Large ribosomal subunit protein uL24 from Pectobacterium carotovorum subsp. carotovorum (strain PC1).